The chain runs to 348 residues: Anthranilate phosphoribosyltransferase (348 aa).

5-phospho-alpha-D-ribose 1-diphosphate is bound by residues Gly-81, 84-85, Thr-89, 91-94, 109-117, and Ser-121; these read GD, NIST, and KHGNRAMSS. Gly-81 is a binding site for anthranilate. Residue Ser-93 participates in Mg(2+) binding. Asn-112 is an anthranilate binding site. Arg-167 lines the anthranilate pocket. Mg(2+) contacts are provided by Asp-226 and Glu-227.

Belongs to the anthranilate phosphoribosyltransferase family. Homodimer. Mg(2+) serves as cofactor.

The enzyme catalyses N-(5-phospho-beta-D-ribosyl)anthranilate + diphosphate = 5-phospho-alpha-D-ribose 1-diphosphate + anthranilate. Its pathway is amino-acid biosynthesis; L-tryptophan biosynthesis; L-tryptophan from chorismate: step 2/5. In terms of biological role, catalyzes the transfer of the phosphoribosyl group of 5-phosphorylribose-1-pyrophosphate (PRPP) to anthranilate to yield N-(5'-phosphoribosyl)-anthranilate (PRA). The polypeptide is Anthranilate phosphoribosyltransferase (Thermomicrobium roseum (strain ATCC 27502 / DSM 5159 / P-2)).